Consider the following 176-residue polypeptide: Disulfide bond formation protein B (176 aa).

Topologically, residues 1–14 (MLQFLNRCSRGRGA) are cytoplasmic. The helical transmembrane segment at 15–31 (WLLMALTAFLLELTALY) threads the bilayer. The Periplasmic portion of the chain corresponds to 32-49 (FQHIMLLQPCVMCIYERV). The cysteines at positions 41 and 44 are disulfide-linked. The chain crosses the membrane as a helical span at residues 50-65 (ALFGILGASLLGAIAP). Residues 66-71 (RSPLRY) lie on the Cytoplasmic side of the membrane. Residues 72–89 (LAIAVWIYSAWKGVQLAW) traverse the membrane as a helical segment. Over 90–144 (AHTMLQLNPSPFNTCDFFVNFPSWLPLDKWLPAVFAASGDCSERQWQFMSLEMPQ) the chain is Periplasmic. The cysteines at positions 104 and 130 are disulfide-linked. Residues 145-163 (WLVGIFAAYLVIAVLVLIS) form a helical membrane-spanning segment. The Cytoplasmic segment spans residues 164–176 (QFVKPKRRDLFGR).

It belongs to the DsbB family.

The protein localises to the cell inner membrane. Required for disulfide bond formation in some periplasmic proteins. Acts by oxidizing the DsbA protein. This is Disulfide bond formation protein B from Yersinia pestis bv. Antiqua (strain Nepal516).